A 65-amino-acid chain; its full sequence is KEGYLVNSYTGCKYECLKLGDNDYCLRECRQQYGKSGGYCYAFACWCTHLYEQAVVWPLPNKTCN.

Positions 1–65 constitute an LCN-type CS-alpha/beta domain; the sequence is KEGYLVNSYT…VWPLPNKTCN (65 aa). 4 cysteine pairs are disulfide-bonded: Cys12–Cys64, Cys16–Cys40, Cys25–Cys45, and Cys29–Cys47.

The protein belongs to the long (4 C-C) scorpion toxin superfamily. Sodium channel inhibitor family. Beta subfamily. In terms of tissue distribution, expressed by the venom gland.

It is found in the secreted. Beta toxins bind voltage-independently at site-4 of sodium channels (Nav) and shift the voltage of activation toward more negative potentials thereby affecting sodium channel activation and promoting spontaneous and repetitive firing. Highly potent. The polypeptide is Toxin CsEM1 (Centruroides sculpturatus (Arizona bark scorpion)).